The following is a 409-amino-acid chain: Ribose-phosphate pyrophosphokinase 1 (409 aa).

Positions 128, 130, and 143 each coordinate Mg(2+). The residue at position 199 (serine 199) is a Phosphoserine.

This sequence belongs to the ribose-phosphate pyrophosphokinase family.

It localises to the cytoplasm. It catalyses the reaction D-ribose 5-phosphate + ATP = 5-phospho-alpha-D-ribose 1-diphosphate + AMP + H(+). It participates in metabolic intermediate biosynthesis; 5-phospho-alpha-D-ribose 1-diphosphate biosynthesis; 5-phospho-alpha-D-ribose 1-diphosphate from D-ribose 5-phosphate (route I): step 1/1. In terms of biological role, 5-phosphoribose 1-diphosphate synthase involved in nucleotide, histidine, and tryptophan biosynthesis. Active in heteromultimeric complexes with other 5-phosphoribose 1-diphosphate synthases. This chain is Ribose-phosphate pyrophosphokinase 1, found in Schizosaccharomyces pombe (strain 972 / ATCC 24843) (Fission yeast).